Consider the following 479-residue polypeptide: Glucagon receptor (479 aa).

Positions 1–25 (MPPARLRHPHLLLLLLLACQPQAPA) are cleaved as a signal peptide. At 26 to 136 (AQAMDFLFQK…ELGVQREVAE (111 aa)) the chain is on the extracellular side. Disulfide bonds link Cys43-Cys67, Cys58-Cys100, and Cys81-Cys121. N-linked (GlcNAc...) asparagine glycosylation is found at Asn46, Asn59, Asn74, Asn78, and Asn117. A helical transmembrane segment spans residues 137 to 161 (MYSSFQAMYTAGYSLSLAALLLALA). Over 162 to 173 (ILLGLSKLHCTR) the chain is Cytoplasmic. Residues 174-198 (NYIHANLLASFVLRASSVLALDALL) traverse the membrane as a helical segment. Over 199-225 (KTRYSQRLGDDLSVSIWLSDEAVAGCR) the chain is Extracellular. The cysteines at positions 224 and 294 are disulfide-linked. The helical transmembrane segment at 226 to 249 (VAAVFMQYGVVANYCWLLVEGVYL) threads the bilayer. Topologically, residues 250–263 (HSLLRQATIPERSC) are cytoplasmic. The chain crosses the membrane as a helical span at residues 264–285 (FPLYLAIGWGAPMLFVIPWAVV). The Extracellular segment spans residues 286–303 (KCLFENIQCWTSNDNMGF). The helical transmembrane segment at 304 to 326 (WWILRFPVFLAILINFSIFIRVL) threads the bilayer. Residues 327-350 (HVLVAKLRAHQMRCTDYKFRLARS) are Cytoplasmic-facing. The helical transmembrane segment at 351-369 (TLTLIPLLGVHEVVFAFVT) threads the bilayer. Over 370 to 381 (DEHAQGALRSAK) the chain is Extracellular. A helical membrane pass occupies residues 382 to 402 (LFFDLFLSSFQGLLVAVLYCF). At 403–479 (LNKEVQAELL…GLPGVAENPF (77 aa)) the chain is on the cytoplasmic side. The segment at 426–479 (KAHRVGSHSARPPSGPPSEKLLLSTGGSSNGTSQEPSAETHLASGLPGVAENPF) is disordered. Over residues 446 to 458 (LLLSTGGSSNGTS) the composition is skewed to low complexity. Ser458 is subject to Phosphoserine.

Belongs to the G-protein coupled receptor 2 family. Post-translationally, ligand-binding promotes phosphorylation of serine residues in the C-terminal cytoplasmic domain. Phosphorylation is important for receptor endocytosis after ligand-binding.

Its subcellular location is the cell membrane. In terms of biological role, G-protein coupled receptor for glucagon that plays a central role in the regulation of blood glucose levels and glucose homeostasis. Regulates the rate of hepatic glucose production by promoting glycogen hydrolysis and gluconeogenesis. Plays an important role in mediating the responses to fasting. Ligand binding causes a conformation change that triggers signaling via guanine nucleotide-binding proteins (G proteins) and modulates the activity of down-stream effectors, such as adenylate cyclase. Promotes activation of adenylate cyclase. Besides, plays a role in signaling via a phosphatidylinositol-calcium second messenger system. The chain is Glucagon receptor from Sus scrofa (Pig).